Here is a 433-residue protein sequence, read N- to C-terminus: Glutamate-1-semialdehyde 2,1-aminomutase (433 aa).

An N6-(pyridoxal phosphate)lysine modification is found at Lys-271.

The protein belongs to the class-III pyridoxal-phosphate-dependent aminotransferase family. HemL subfamily. As to quaternary structure, homodimer. It depends on pyridoxal 5'-phosphate as a cofactor.

It is found in the cytoplasm. The enzyme catalyses (S)-4-amino-5-oxopentanoate = 5-aminolevulinate. Its pathway is porphyrin-containing compound metabolism; protoporphyrin-IX biosynthesis; 5-aminolevulinate from L-glutamyl-tRNA(Glu): step 2/2. It functions in the pathway porphyrin-containing compound metabolism; chlorophyll biosynthesis. This chain is Glutamate-1-semialdehyde 2,1-aminomutase, found in Prochlorococcus marinus (strain SARG / CCMP1375 / SS120).